The chain runs to 245 residues: Orotidine 5'-phosphate decarboxylase (245 aa).

Substrate contacts are provided by residues Asp22, Lys44, Asp71–Thr80, Thr131, Arg192, Gln201, Gly221, and Arg222. The Proton donor role is filled by Lys73.

This sequence belongs to the OMP decarboxylase family. Type 1 subfamily. As to quaternary structure, homodimer.

The enzyme catalyses orotidine 5'-phosphate + H(+) = UMP + CO2. The protein operates within pyrimidine metabolism; UMP biosynthesis via de novo pathway; UMP from orotate: step 2/2. Functionally, catalyzes the decarboxylation of orotidine 5'-monophosphate (OMP) to uridine 5'-monophosphate (UMP). In Klebsiella pneumoniae (strain 342), this protein is Orotidine 5'-phosphate decarboxylase.